The following is a 146-amino-acid chain: MTPELKSLGAKTPYIFEYNSQLLEAFPNPNPNLDPLITLECKEFTSLCPITSQPDFGIIYIRYIPKDKMVESKSLKLYLFSYRNHGSFHESCINTILLDLVQLLEPKYLEVYGDFASRGGIAIKPFVNYAIKEYQEFKEKRLLNAK.

The active-site Thioimide intermediate is cysteine 48. Catalysis depends on aspartate 55, which acts as the Proton donor. Substrate-binding positions include 70-72 (VES) and 89-90 (HE).

This sequence belongs to the GTP cyclohydrolase I family. QueF type 1 subfamily.

It is found in the cytoplasm. The enzyme catalyses 7-aminomethyl-7-carbaguanine + 2 NADP(+) = 7-cyano-7-deazaguanine + 2 NADPH + 3 H(+). Its pathway is tRNA modification; tRNA-queuosine biosynthesis. In terms of biological role, catalyzes the NADPH-dependent reduction of 7-cyano-7-deazaguanine (preQ0) to 7-aminomethyl-7-deazaguanine (preQ1). The chain is NADPH-dependent 7-cyano-7-deazaguanine reductase from Helicobacter pylori (strain Shi470).